A 481-amino-acid chain; its full sequence is Aspartyl/glutamyl-tRNA(Asn/Gln) amidotransferase subunit B (481 aa).

It belongs to the GatB/GatE family. GatB subfamily. Heterotrimer of A, B and C subunits.

The enzyme catalyses L-glutamyl-tRNA(Gln) + L-glutamine + ATP + H2O = L-glutaminyl-tRNA(Gln) + L-glutamate + ADP + phosphate + H(+). The catalysed reaction is L-aspartyl-tRNA(Asn) + L-glutamine + ATP + H2O = L-asparaginyl-tRNA(Asn) + L-glutamate + ADP + phosphate + 2 H(+). Its function is as follows. Allows the formation of correctly charged Asn-tRNA(Asn) or Gln-tRNA(Gln) through the transamidation of misacylated Asp-tRNA(Asn) or Glu-tRNA(Gln) in organisms which lack either or both of asparaginyl-tRNA or glutaminyl-tRNA synthetases. The reaction takes place in the presence of glutamine and ATP through an activated phospho-Asp-tRNA(Asn) or phospho-Glu-tRNA(Gln). This Pseudomonas aeruginosa (strain LESB58) protein is Aspartyl/glutamyl-tRNA(Asn/Gln) amidotransferase subunit B.